The sequence spans 170 residues: MDRERALHRAGQVEAILVAQIELVGQVIQVQRSVYESLRTRAWEHVESFVSRAQALSREFLHLDKRCFLLLQEVRPYGDAPVDFDSFFAYLRRADVNVHDAVVALYRTLRSKVASSKNEHDAIQHYLTHARGLAHALVSALTCEQQGSSYTKDGCPVRCAPGSLVFDRVL.

This is an uncharacterized protein from Treponema pallidum (strain Nichols).